The following is a 200-amino-acid chain: Dephospho-CoA kinase (200 aa).

The region spanning 3–200 is the DPCK domain; sequence VLGLTGSIGM…LSGKPAAATR (198 aa). 11-16 is a binding site for ATP; sequence GMGKTT.

This sequence belongs to the CoaE family.

It is found in the cytoplasm. The catalysed reaction is 3'-dephospho-CoA + ATP = ADP + CoA + H(+). Its pathway is cofactor biosynthesis; coenzyme A biosynthesis; CoA from (R)-pantothenate: step 5/5. Functionally, catalyzes the phosphorylation of the 3'-hydroxyl group of dephosphocoenzyme A to form coenzyme A. The polypeptide is Dephospho-CoA kinase (Brucella abortus (strain 2308)).